The chain runs to 351 residues: DNA polymerase IV (351 aa).

The UmuC domain occupies 4–185 (IIHIDMDCFY…LPLRKIPGVG (182 aa)). Positions 8 and 103 each coordinate Mg(2+). Glutamate 104 is a catalytic residue.

Belongs to the DNA polymerase type-Y family. In terms of assembly, monomer. Requires Mg(2+) as cofactor.

The protein localises to the cytoplasm. It catalyses the reaction DNA(n) + a 2'-deoxyribonucleoside 5'-triphosphate = DNA(n+1) + diphosphate. Poorly processive, error-prone DNA polymerase involved in untargeted mutagenesis. Copies undamaged DNA at stalled replication forks, which arise in vivo from mismatched or misaligned primer ends. These misaligned primers can be extended by PolIV. Exhibits no 3'-5' exonuclease (proofreading) activity. May be involved in translesional synthesis, in conjunction with the beta clamp from PolIII. The protein is DNA polymerase IV of Photorhabdus laumondii subsp. laumondii (strain DSM 15139 / CIP 105565 / TT01) (Photorhabdus luminescens subsp. laumondii).